The primary structure comprises 134 residues: MSEQEVLQKNNSPEGKEDRIIGKHVFGNLYDIDAERLNDKEFLEKLVLEAVNIAHMKLVEIKAWSFGGKKGGVSVIALVEESHIALHTWNEYNYATLDVYTCGEDSDPQSAFAHIVNALNPKRYQMFYADRSSQ.

The Schiff-base intermediate with substrate; via pyruvic acid role is filled by S82. S82 carries the pyruvic acid (Ser); by autocatalysis modification. H87 serves as the catalytic Proton acceptor; for processing activity. Residue C102 is the Proton donor; for catalytic activity of the active site.

Belongs to the prokaryotic AdoMetDC family. Type 1 subfamily. As to quaternary structure, heterooctamer of four alpha and four beta chains arranged as a tetramer of alpha/beta heterodimers. Pyruvate is required as a cofactor. In terms of processing, is synthesized initially as an inactive proenzyme. Formation of the active enzyme involves a self-maturation process in which the active site pyruvoyl group is generated from an internal serine residue via an autocatalytic post-translational modification. Two non-identical subunits are generated from the proenzyme in this reaction, and the pyruvate is formed at the N-terminus of the alpha chain, which is derived from the carboxyl end of the proenzyme. The post-translation cleavage follows an unusual pathway, termed non-hydrolytic serinolysis, in which the side chain hydroxyl group of the serine supplies its oxygen atom to form the C-terminus of the beta chain, while the remainder of the serine residue undergoes an oxidative deamination to produce ammonia and the pyruvoyl group blocking the N-terminus of the alpha chain.

It carries out the reaction L-arginine + H(+) = agmatine + CO2. It functions in the pathway amine and polyamine biosynthesis; agmatine biosynthesis; agmatine from L-arginine: step 1/1. Specifically catalyzes the decarboxylation of L-arginine to agmatine. Has no S-adenosylmethionine decarboxylase (AdoMetDC) activity. The polypeptide is Arginine decarboxylase proenzyme (Saccharolobus islandicus (strain M.16.4 / Kamchatka #3) (Sulfolobus islandicus)).